Reading from the N-terminus, the 205-residue chain is CASP-like protein 0U1 (205 aa).

Residues 1 to 66 (MSGGDIDPTA…GYHKFAVFQF (66 aa)) are Cytoplasmic-facing. The MARVEL domain maps to 10 to 162 (AINSPKFRLI…SMMFTWKEWR (153 aa)). The chain crosses the membrane as a helical span at residues 67–87 (LVVICVTYWLFTMLWMGMYLI). Topologically, residues 88 to 90 (QKV) are extracellular. The chain crosses the membrane as a helical span at residues 91 to 111 (PPAGTEFMIYAVFNVLILIAF). Residues 112–137 (STSWTECNETIVDPTYPVCKRATGAK) are Cytoplasmic-facing. Residues 138–158 (ASIAFAMFTWLALCVSMMFTW) form a helical membrane-spanning segment. Over 159–167 (KEWRDQNYE) the chain is Extracellular. A helical transmembrane segment spans residues 168–188 (GLPIFGDFSSFMPGGGGGGMG). The Cytoplasmic portion of the chain corresponds to 189 to 205 (GGGGYERPSDVNTQTYA).

This sequence belongs to the Casparian strip membrane proteins (CASP) family. As to quaternary structure, homodimer and heterodimers.

Its subcellular location is the cell membrane. The sequence is that of CASP-like protein 0U1 from Micromonas pusilla (strain CCMP1545) (Picoplanktonic green alga).